A 733-amino-acid chain; its full sequence is Catalase-peroxidase (733 aa).

A disordered region spans residues 1–25; sequence MNEERKCPITGATHKPSAEKGRSNH. Residues 16–25 are compositionally biased toward basic and acidic residues; it reads PSAEKGRSNH. Positions 96-219 form a cross-link, tryptophyl-tyrosyl-methioninium (Trp-Tyr) (with M-245); the sequence is WHSAGTYRTS…LAAVQMGLIY (124 aa). The active-site Proton acceptor is His97. Residues 219–245 constitute a cross-link (tryptophyl-tyrosyl-methioninium (Tyr-Met) (with W-96)); sequence YVNPEGPNGKPDPLAAAKDIRETFARM. Heme b is bound at residue His260.

This sequence belongs to the peroxidase family. Peroxidase/catalase subfamily. As to quaternary structure, homodimer or homotetramer. It depends on heme b as a cofactor. In terms of processing, formation of the three residue Trp-Tyr-Met cross-link is important for the catalase, but not the peroxidase activity of the enzyme.

It carries out the reaction H2O2 + AH2 = A + 2 H2O. The enzyme catalyses 2 H2O2 = O2 + 2 H2O. Bifunctional enzyme with both catalase and broad-spectrum peroxidase activity. The protein is Catalase-peroxidase of Chlorobium chlorochromatii (strain CaD3).